Consider the following 452-residue polypeptide: Trigger factor (452 aa).

Residues 171 to 256 form the PPIase FKBP-type domain; the sequence is GDRVTVSFKG…ATKLEAPQET (86 aa).

It belongs to the FKBP-type PPIase family. Tig subfamily.

The protein localises to the cytoplasm. It catalyses the reaction [protein]-peptidylproline (omega=180) = [protein]-peptidylproline (omega=0). Its function is as follows. Involved in protein export. Acts as a chaperone by maintaining the newly synthesized protein in an open conformation. Functions as a peptidyl-prolyl cis-trans isomerase. The protein is Trigger factor of Rhodopseudomonas palustris (strain ATCC BAA-98 / CGA009).